The sequence spans 579 residues: YTH domain-containing family protein 2 (579 aa).

The segment at 1–45 is disordered; the sequence is MSASSLLEQRPKGQGNKVQNGSVHQKDGLNDDDFEPYLSPQARPN. Residue Ser-2 is modified to N-acetylserine. Phosphoserine is present on residues Ser-2, Ser-4, Ser-5, Ser-22, Ser-39, and Ser-196. The interval 2 to 384 is localization to mRNA processing bodies (P-bodies); the sequence is SASSLLEQRP…QAGSGSTPSE (383 aa). Residues 247-387 are disordered; that stretch reads AKQQPKLKTK…SGSTPSEPHP (141 aa). The span at 291–316 shows a compositional bias: polar residues; it reads ALVQNIGQPTQGSPQPVGQQANNSPP. Residues 337-349 show a composition bias toward low complexity; the sequence is AQLSVQQQAAQPT. The residue at position 359 (Ser-359) is a Phosphoserine. The span at 359–371 shows a compositional bias: gly residues; sequence SGFGHNGVDGNGV. Over residues 372–383 the composition is skewed to polar residues; it reads GQSQAGSGSTPS. An interaction with m6A-containing mRNAs region spans residues 385–579; it reads PHPVLEKLRS…VKKERQGRGK (195 aa). A Phosphoserine modification is found at Ser-394. The 135-residue stretch at 410 to 544 folds into the YTH domain; it reads GRVFIIKSYS…EKAKQVLKII (135 aa). Residues 416–418, Asp-422, 432–433, Asn-462, Trp-486, and Trp-491 each bind RNA; these read KSY and WC.

It belongs to the YTHDF family. YTHDF2 subfamily. As to quaternary structure, interacts with CNOT1; interaction is direct and promotes recruitment of the CCR4-NOT complex. Interacts with YTHDF3. Interacts with RIDA/HRSP12; interaction leads to recruitment of the ribonuclease P/MRP complex. Ubiquitinated by the SCF(SKP2) complex, leading to its degradation. Highly expressed in induced pluripotent stem cells (iPSCs) and down-regulated during neural differentiation.

Its subcellular location is the cytoplasm. It is found in the cytosol. It localises to the P-body. The protein localises to the stress granule. The protein resides in the nucleus. In terms of biological role, specifically recognizes and binds N6-methyladenosine (m6A)-containing RNAs, and regulates their stability. M6A is a modification present at internal sites of mRNAs and some non-coding RNAs and plays a role in mRNA stability and processing. Acts as a regulator of mRNA stability by promoting degradation of m6A-containing mRNAs via interaction with the CCR4-NOT and ribonuclease P/MRP complexes, depending on the context. The YTHDF paralogs (YTHDF1, YTHDF2 and YTHDF3) share m6A-containing mRNAs targets and act redundantly to mediate mRNA degradation and cellular differentiation. M6A-containing mRNAs containing a binding site for RIDA/HRSP12 (5'-GGUUC-3') are preferentially degraded by endoribonucleolytic cleavage: cooperative binding of RIDA/HRSP12 and YTHDF2 to transcripts leads to recruitment of the ribonuclease P/MRP complex. Other m6A-containing mRNAs undergo deadenylation via direct interaction between YTHDF2 and CNOT1, leading to recruitment of the CCR4-NOT and subsequent deadenylation of m6A-containing mRNAs. Required maternally to regulate oocyte maturation: probably acts by binding to m6A-containing mRNAs, thereby regulating maternal transcript dosage during oocyte maturation, which is essential for the competence of oocytes to sustain early zygotic development. Also required during spermatogenesis: regulates spermagonial adhesion by promoting degradation of m6A-containing transcripts coding for matrix metallopeptidases. Also involved in hematopoietic stem cells specification by binding to m6A-containing mRNAs, leading to promote their degradation. Also acts as a regulator of neural development by promoting m6A-dependent degradation of neural development-related mRNA targets. Inhibits neural specification of induced pluripotent stem cells by binding to methylated neural-specific mRNAs and promoting their degradation, thereby restraining neural differentiation. Regulates circadian regulation of hepatic lipid metabolism: acts by promoting m6A-dependent degradation of PPARA transcripts. Regulates the innate immune response to infection by inhibiting the type I interferon response: acts by binding to m6A-containing IFNB transcripts and promoting their degradation. May also act as a promoter of cap-independent mRNA translation following heat shock stress: upon stress, relocalizes to the nucleus and specifically binds mRNAs with some m6A methylation mark at their 5'-UTR, protecting demethylation of mRNAs by FTO, thereby promoting cap-independent mRNA translation. Regulates mitotic entry by promoting the phase-specific m6A-dependent degradation of WEE1 transcripts. Promotes formation of phase-separated membraneless compartments, such as P-bodies or stress granules, by undergoing liquid-liquid phase separation upon binding to mRNAs containing multiple m6A-modified residues: polymethylated mRNAs act as a multivalent scaffold for the binding of YTHDF proteins, juxtaposing their disordered regions and thereby leading to phase separation. The resulting mRNA-YTHDF complexes then partition into different endogenous phase-separated membraneless compartments, such as P-bodies, stress granules or neuronal RNA granules. May also recognize and bind RNAs modified by C5-methylcytosine (m5C) and act as a regulator of rRNA processing. (Microbial infection) Promotes viral gene expression and replication of polyomavirus SV40: acts by binding to N6-methyladenosine (m6A)-containing viral RNAs. Its function is as follows. (Microbial infection) Promotes viral gene expression and virion production of kaposis sarcoma-associated herpesvirus (KSHV) at some stage of the KSHV life cycle (in iSLK.219 and iSLK.BAC16 cells). Acts by binding to N6-methyladenosine (m6A)-containing viral RNAs. This chain is YTH domain-containing family protein 2, found in Homo sapiens (Human).